We begin with the raw amino-acid sequence, 204 residues long: Peroxynitrite isomerase (204 aa).

Positions 21-27 (GEWEGSG) match the GXWXGXG motif. Histidine 195 contacts heme b.

It belongs to the nitrobindin family. In terms of assembly, homodimer. Heme b serves as cofactor.

The enzyme catalyses peroxynitrite = nitrate. It functions in the pathway nitrogen metabolism. Functionally, heme-binding protein able to scavenge peroxynitrite and to protect free L-tyrosine against peroxynitrite-mediated nitration, by acting as a peroxynitrite isomerase that converts peroxynitrite to nitrate. Therefore, this protein likely plays a role in peroxynitrite sensing and in the detoxification of reactive nitrogen and oxygen species (RNS and ROS, respectively). Is able to bind nitric oxide (NO) in vitro, but may act as a sensor of peroxynitrite levels in vivo. In Arthrobacter sp. (strain FB24), this protein is Peroxynitrite isomerase.